Here is a 338-residue protein sequence, read N- to C-terminus: LIX1-like protein (338 aa).

The tract at residues 1–65 (METMRAQRLQ…LLLAGAPGLP (65 aa)) is disordered. Positions 29–38 (TGAPTSAATP) are enriched in low complexity. Residues 39-56 (PAGPPPAPPPPAPPPPPL) show a composition bias toward pro residues.

Belongs to the LIX1 family.

The sequence is that of LIX1-like protein (Lix1l) from Rattus norvegicus (Rat).